Consider the following 572-residue polypeptide: Methionine--tRNA ligase (572 aa).

The 'HIGH' region motif lies at 11 to 21 (PYINGIKHLGN). C143, C146, C156, and C159 together coordinate Zn(2+). Positions 346–350 (QFSTS) match the 'KMSKS' region motif. Residue T349 participates in ATP binding.

This sequence belongs to the class-I aminoacyl-tRNA synthetase family. MetG type 1 subfamily. In terms of assembly, monomer. The cofactor is Zn(2+).

The protein resides in the cytoplasm. The enzyme catalyses tRNA(Met) + L-methionine + ATP = L-methionyl-tRNA(Met) + AMP + diphosphate. In terms of biological role, is required not only for elongation of protein synthesis but also for the initiation of all mRNA translation through initiator tRNA(fMet) aminoacylation. This chain is Methionine--tRNA ligase, found in Cereibacter sphaeroides (strain KD131 / KCTC 12085) (Rhodobacter sphaeroides).